Reading from the N-terminus, the 366-residue chain is MADNSSDYRALFLNDVPMMDARAPVEFSKGAFPGVINLPLMNDIERQKVGTCYKQHGQDAAIQLGHQLVCGQVKDERVEAWVEFARANPNGYLYCFRGGLRSQTVQRWLKDAGVDYPRILGGYKAMRTFLLDTLHEAVTECDLVVLGGMTGTGKTEVLTQLPNGLDLEGVANHRGSSFGKRATGQPAQIDFENRLAINLLKKRAAGIEQFVVEDESRLVGSCNVPLELHQAMQGCPVVWLEDSFEHRVERILADYVVNLCAEFISVKGEELGFGLFADRLLQSLNNIHKRLGGERHQRLLALMQTALEEQQRSGAVELHRGWIEGLLGEYYDPMYAYQREHKAARIEFAGNQFEVSGYLSERSSRR.

One can recognise a Rhodanese domain in the interval 12–135 (FLNDVPMMDA…MRTFLLDTLH (124 aa)). Catalysis depends on cysteine 95, which acts as the S-selanylcysteine intermediate.

Belongs to the SelU family. As to quaternary structure, monomer.

It carries out the reaction 5-methylaminomethyl-2-thiouridine(34) in tRNA + selenophosphate + (2E)-geranyl diphosphate + H2O + H(+) = 5-methylaminomethyl-2-selenouridine(34) in tRNA + (2E)-thiogeraniol + phosphate + diphosphate. The enzyme catalyses 5-methylaminomethyl-2-thiouridine(34) in tRNA + (2E)-geranyl diphosphate = 5-methylaminomethyl-S-(2E)-geranyl-thiouridine(34) in tRNA + diphosphate. It catalyses the reaction 5-methylaminomethyl-S-(2E)-geranyl-thiouridine(34) in tRNA + selenophosphate + H(+) = 5-methylaminomethyl-2-(Se-phospho)selenouridine(34) in tRNA + (2E)-thiogeraniol. The catalysed reaction is 5-methylaminomethyl-2-(Se-phospho)selenouridine(34) in tRNA + H2O = 5-methylaminomethyl-2-selenouridine(34) in tRNA + phosphate. Functionally, involved in the post-transcriptional modification of the uridine at the wobble position (U34) of tRNA(Lys), tRNA(Glu) and tRNA(Gln). Catalyzes the conversion of 2-thiouridine (S2U-RNA) to 2-selenouridine (Se2U-RNA). Acts in a two-step process involving geranylation of 2-thiouridine (S2U) to S-geranyl-2-thiouridine (geS2U) and subsequent selenation of the latter derivative to 2-selenouridine (Se2U) in the tRNA chain. In Pseudomonas syringae pv. tomato (strain ATCC BAA-871 / DC3000), this protein is tRNA 2-selenouridine synthase.